The chain runs to 101 residues: B3 domain-containing protein At1g08985 (101 aa).

Positions 7-101 (IVKTLSETDC…WQNTKFIFSM (95 aa)) form a DNA-binding region, TF-B3.

The protein localises to the nucleus. The chain is B3 domain-containing protein At1g08985 from Arabidopsis thaliana (Mouse-ear cress).